A 482-amino-acid chain; its full sequence is QWRF motif-containing protein 3 (482 aa).

Residues 1–20 (MKSCEHELLKTRRGKSREVS) are compositionally biased toward basic and acidic residues. Disordered stretches follow at residues 1-60 (MKSC…GLKK) and 171-220 (TAKP…QWAL). Residues 21–42 (SRFLSSPSASSSPNRRNSTSNS) show a composition bias toward low complexity. A compositionally biased stretch (polar residues) spans 191–219 (RTNSSKGIENRLQRNNSVSRYGSSMSQWA). The QWRF motif signature appears at 292 to 295 (QWRF).

It belongs to the QWRF family.

The sequence is that of QWRF motif-containing protein 3 (QWRF3) from Arabidopsis thaliana (Mouse-ear cress).